A 196-amino-acid chain; its full sequence is Small ribosomal subunit protein uS4m (196 aa).

The S4 RNA-binding domain maps to 88–154 (KRLDVILVRL…FKSNIRKNFQ (67 aa)).

This sequence belongs to the universal ribosomal protein uS4 family.

The protein localises to the mitochondrion. This is Small ribosomal subunit protein uS4m (RPS4) from Marchantia polymorpha (Common liverwort).